The sequence spans 322 residues: Methionyl-tRNA formyltransferase (322 aa).

A (6S)-5,6,7,8-tetrahydrofolate-binding site is contributed by 113-116 (SLLP).

This sequence belongs to the Fmt family.

It carries out the reaction L-methionyl-tRNA(fMet) + (6R)-10-formyltetrahydrofolate = N-formyl-L-methionyl-tRNA(fMet) + (6S)-5,6,7,8-tetrahydrofolate + H(+). Functionally, attaches a formyl group to the free amino group of methionyl-tRNA(fMet). The formyl group appears to play a dual role in the initiator identity of N-formylmethionyl-tRNA by promoting its recognition by IF2 and preventing the misappropriation of this tRNA by the elongation apparatus. In Blochmanniella pennsylvanica (strain BPEN), this protein is Methionyl-tRNA formyltransferase.